The following is a 514-amino-acid chain: Serine/threonine protein phosphatase PstP (514 aa).

The Cytoplasmic segment spans residues 1–302; sequence MARVTLVLRY…RPRWSGRRLA (302 aa). A PPM-type phosphatase domain is found at 9-238; sequence RYAARSDRGL…DNVTVVVADV (230 aa). Mn(2+) contacts are provided by Asp-38, Gly-39, Asp-118, Ser-160, Asp-191, and Asp-229. The chain crosses the membrane as a helical span at residues 303-323; it reads FVVALVTVLMTAGLLIGRAII. Over 324–514 the chain is Extracellular; that stretch reads RSNYYVADYA…QPGIDCRAAA (191 aa). Positions 420–514 are disordered; the sequence is LLPPCPAPRA…QPGIDCRAAA (95 aa). Positions 440–480 are enriched in low complexity; it reads TTSETTEPNVTSSPASPSPTTSASAPTGTTPAIPTSASPAA.

Mn(2+) serves as cofactor.

Its subcellular location is the cell membrane. The catalysed reaction is O-phospho-L-seryl-[protein] + H2O = L-seryl-[protein] + phosphate. It carries out the reaction O-phospho-L-threonyl-[protein] + H2O = L-threonyl-[protein] + phosphate. Its function is as follows. Plays an important role in regulating cell division and growth by reversible phosphorylation signaling. May play important roles in regulating cellular metabolism and signaling pathways, which could mediate the growth and development of the cell. Plays a role in establishing and maintaining infection. This is Serine/threonine protein phosphatase PstP (pstP) from Mycobacterium tuberculosis (strain CDC 1551 / Oshkosh).